The following is a 299-amino-acid chain: Probable lipid kinase YegS (299 aa).

The DAGKc domain occupies 2-133; sequence AEFPASLLIL…IDMAQVNKQT (132 aa). ATP-binding positions include threonine 40, 66-72, and threonine 95; that span reads GDGTINE. Mg(2+) contacts are provided by leucine 215, aspartate 218, and leucine 220. Glutamate 271 functions as the Proton acceptor in the catalytic mechanism.

The protein belongs to the diacylglycerol/lipid kinase family. YegS lipid kinase subfamily. Mg(2+) is required as a cofactor. The cofactor is Ca(2+).

It localises to the cytoplasm. Functionally, probably phosphorylates lipids; the in vivo substrate is unknown. The protein is Probable lipid kinase YegS of Escherichia coli O17:K52:H18 (strain UMN026 / ExPEC).